The sequence spans 430 residues: Putative FBD-associated F-box protein At5g56440 (430 aa).

Residues Met-1–Pro-49 enclose the F-box domain. The 51-residue stretch at Gln-349–Ser-399 folds into the FBD domain.

This chain is Putative FBD-associated F-box protein At5g56440, found in Arabidopsis thaliana (Mouse-ear cress).